Reading from the N-terminus, the 250-residue chain is 5'-nucleotidase SurE (250 aa).

4 residues coordinate a divalent metal cation: aspartate 8, aspartate 9, serine 39, and asparagine 91.

The protein belongs to the SurE nucleotidase family. A divalent metal cation is required as a cofactor.

The protein resides in the cytoplasm. It catalyses the reaction a ribonucleoside 5'-phosphate + H2O = a ribonucleoside + phosphate. Functionally, nucleotidase that shows phosphatase activity on nucleoside 5'-monophosphates. This Leptospira interrogans serogroup Icterohaemorrhagiae serovar copenhageni (strain Fiocruz L1-130) protein is 5'-nucleotidase SurE.